The sequence spans 4080 residues: Hybrid PKS-NRPS synthetase poxE (4080 aa).

Positions 8-442 (REPIAIVGSG…GTNAHAIIEA (435 aa)) constitute a Ketosynthase family 3 (KS3) domain. Active-site for beta-ketoacyl synthase activity residues include C181, H320, and H362. The interval 554–878 (VFTGQGAQWA…QRGMNDVEAM (325 aa)) is malonyl-CoA:ACP transacylase (MAT) domain. Positions 944-1078 (HPILGTRCPD…GRLVITYGPV (135 aa)) are N-terminal hotdog fold. The region spanning 944–1246 (HPILGTRCPD…AVPLEATNAD (303 aa)) is the PKS/mFAS DH domain. A dehydratase (DH) domain region spans residues 945–1243 (PILGTRCPDG…GIHAVPLEAT (299 aa)). The Proton acceptor; for dehydratase activity role is filled by H976. Positions 1093–1246 (MVDVPSERFY…AVPLEATNAD (154 aa)) are C-terminal hotdog fold. D1152 serves as the catalytic Proton donor; for dehydratase activity. Positions 1400–1585 (HFSDYLASVV…GVDTFTSDAD (186 aa)) are methyltransferase (MT) domain. The ketoreductase (KR)domain stretch occupies residues 2118-2292 (TYWLVGLTGS…AGSVMNIGAI (175 aa)). The peptidyl carrier protein stretch occupies residues 2399–2478 (TTDEIYEVIK…TIGEIIKFVL (80 aa)). Residues 2405-2481 (EVIKECFIVK…EIIKFVLEKL (77 aa)) form the Carrier 1 domain. At S2441 the chain carries O-(pantetheine 4'-phosphoryl)serine. The interval 2488–2569 (SLGLSPPTGA…AASPSIHTEE (82 aa)) is disordered. Over residues 2511–2525 (VVVERRNVPRLEKKI) the composition is skewed to basic and acidic residues. Low complexity predominate over residues 2528–2545 (SAGSRTSSSVTGTSKSVS). A compositionally biased stretch (polar residues) spans 2551–2565 (DTASSQTSEAASPSI). The tract at residues 2607-3036 (KEPLSFGQSR…DSKQPGGHVS (430 aa)) is condensation. The segment at 3069-3478 (DMAKQYPQKL…DGRLRIEGRI (410 aa)) is adenylation. A Carrier 2 domain is found at 3593 to 3673 (AHLNEAQAQM…KMALLIKPQE (81 aa)). The interval 3598-3670 (AQAQMVQLWE…TLEKMALLIK (73 aa)) is thiolation. At S3633 the chain carries O-(pantetheine 4'-phosphoryl)serine. Positions 3740-3959 (LTGATGFIGQ…DFVPVEQVVR (220 aa)) are reductase (RED) domain.

This sequence in the C-terminal section; belongs to the NRP synthetase family.

Its pathway is secondary metabolite biosynthesis. In terms of biological role, hybrid PKS-NRPS synthetase; part of the gene cluster that mediates the biosynthesis of oxaleimides, cytotoxic compounds containing an unusual disubstituted succinimide moiety. The first step of the pathway is provided by the HR-PKS poxF that serves in a new mode of collaborative biosynthesis with the PKS-NRPS poxE, by providing the olefin containing amino acid substrate via the synthesis of an ACP-bound dec-4-enoate. The cytochrome P450 monooxygenase poxM-catalyzed oxidation at the alpha-position creates the enzyme-bound 2-hydroxydec-4-enoyl-ACP thioester, which may be prone to spontaneous hydrolysis to yield 2-hydroxydec-4-enoic acid due to increased electrophilicity of the carbonyl. 2-hydroxydec-4-enoic acid can then be further oxidized by poxM to yield the alpha-ketoacid 2-oxodec-4-enoicacid, which is reductively aminated by the aminotransferase poxL to yield (S,E)-2-aminodec-4-enoic acid. The Hybrid PKS-NRPS synthetase poxE then performs condensation between the octaketide product of its PKS modules and the amino group of (S,E)-2-aminodec-4-enoic acid which is activated and incorporated by the adenylation domain. The resulting aminoacyl product can be cyclized by the Diels-Alderase PoxQ and reductively released by the reductive (R) domain of poxE to yield an aldehyde intermediate. The released aldehyde is then substrate for a Knoevenagel condensation by the hydrolyase poxO followed by an oxidation at the 5-position of the pyrrolidone ring. The presence of the olefin from the amino acid building block allows for migration of the substituted allyl group to occur. This allylic transposition reaction takes place in a conjugate addition, semipinacol-like fashion to yield a succinimide intermediate. Iterative two-electron oxidations of the C7 methyl of the succinimide intermediate to the carboxylic acid can be catalyzed by one of two remaining cytochrome P450 monooxygenasess poxC or poxD to yield oxaleimide A. Subsequent oxidation yields the maleimide scaffold oxaleimide I. Both oxaleimide A and oxaleimide I can undergo oxidative modifications in the decalin ring to yield the series of products oxaleimides B to H. In Penicillium oxalicum (strain 114-2 / CGMCC 5302) (Penicillium decumbens), this protein is Hybrid PKS-NRPS synthetase poxE.